The chain runs to 124 residues: Large ribosomal subunit protein bL12 (124 aa).

This sequence belongs to the bacterial ribosomal protein bL12 family. Homodimer. Part of the ribosomal stalk of the 50S ribosomal subunit. Forms a multimeric L10(L12)X complex, where L10 forms an elongated spine to which 2 to 4 L12 dimers bind in a sequential fashion. Binds GTP-bound translation factors.

Functionally, forms part of the ribosomal stalk which helps the ribosome interact with GTP-bound translation factors. Is thus essential for accurate translation. The sequence is that of Large ribosomal subunit protein bL12 from Jannaschia sp. (strain CCS1).